Reading from the N-terminus, the 131-residue chain is ATP synthase epsilon chain, chloroplastic (131 aa).

This sequence belongs to the ATPase epsilon chain family. As to quaternary structure, F-type ATPases have 2 components, CF(1) - the catalytic core - and CF(0) - the membrane proton channel. CF(1) has five subunits: alpha(3), beta(3), gamma(1), delta(1), epsilon(1). CF(0) has three main subunits: a, b and c.

The protein resides in the plastid. The protein localises to the chloroplast thylakoid membrane. Its function is as follows. Produces ATP from ADP in the presence of a proton gradient across the membrane. This is ATP synthase epsilon chain, chloroplastic from Guillardia theta (Cryptophyte).